Reading from the N-terminus, the 570-residue chain is Sulfite reductase [NADPH] hemoprotein beta-component (570 aa).

Positions 434, 440, 479, and 483 each coordinate [4Fe-4S] cluster. Residue Cys-483 coordinates siroheme.

The protein belongs to the nitrite and sulfite reductase 4Fe-4S domain family. Alpha(8)-beta(8). The alpha component is a flavoprotein, the beta component is a hemoprotein. Siroheme is required as a cofactor. [4Fe-4S] cluster serves as cofactor.

It catalyses the reaction hydrogen sulfide + 3 NADP(+) + 3 H2O = sulfite + 3 NADPH + 4 H(+). Its pathway is sulfur metabolism; hydrogen sulfide biosynthesis; hydrogen sulfide from sulfite (NADPH route): step 1/1. Its function is as follows. Component of the sulfite reductase complex that catalyzes the 6-electron reduction of sulfite to sulfide. This is one of several activities required for the biosynthesis of L-cysteine from sulfate. This chain is Sulfite reductase [NADPH] hemoprotein beta-component, found in Escherichia coli O1:K1 / APEC.